An 833-amino-acid polypeptide reads, in one-letter code: Scavenger receptor class F member 2 (833 aa).

The signal sequence occupies residues 1–33 (MEGAGSRGAGPARRQGARGLGLLLLLWLLPGLA). Over 34 to 433 (APQDLNPRGR…ACHLETNQRK (400 aa)) the chain is Extracellular. EGF-like domains lie at 63-102 (LGDECGIAVCEGNSTCSENEVCVRPGECRCRHGYFGANCD), 114-145 (CKERCSCHPHGQCEDVTGQCTCHARRWGARCE), 140-174 (WGARCEHACQCQHGTCHPRSGACRCEPGWWGAQCA), 175-204 (SACYCSATSRCDPQTGACLCHVGWWGRSCN), 205-233 (NQCACNSSPCEQQSGRCQCRERMFGARCD), and 228-262 (FGARCDRYCQCSHGRCHPVDGTCACDPGYRGKYCR). Cystine bridges form between cysteine 67-cysteine 78, cysteine 72-cysteine 90, cysteine 92-cysteine 101, cysteine 118-cysteine 126, cysteine 120-cysteine 133, cysteine 135-cysteine 144, cysteine 148-cysteine 155, cysteine 150-cysteine 162, cysteine 164-cysteine 173, cysteine 177-cysteine 185, cysteine 179-cysteine 192, cysteine 194-cysteine 203, cysteine 207-cysteine 214, cysteine 209-cysteine 221, cysteine 223-cysteine 232, cysteine 236-cysteine 243, cysteine 238-cysteine 250, and cysteine 252-cysteine 261. Asparagine 75 carries an N-linked (GlcNAc...) asparagine glycan. Asparagine 302 and asparagine 357 each carry an N-linked (GlcNAc...) asparagine glycan. Residues 364–395 (CAFVCSDCGSGHCDFQSGRCLCSPGVHGPHCN) enclose the EGF-like 7 domain. Intrachain disulfides connect cysteine 368–cysteine 376, cysteine 371–cysteine 383, and cysteine 385–cysteine 394. An N-linked (GlcNAc...) asparagine glycan is attached at asparagine 395. Residues 434–454 (GVMGAGALLTLLLGLLLSLLG) traverse the membrane as a helical segment. Residues 455 to 833 (CCCACRGKDS…SRAGTAPGAS (379 aa)) lie on the Cytoplasmic side of the membrane. Phosphoserine is present on residues serine 538 and serine 600. Residues 578–833 (SLEPTGTSTP…SRAGTAPGAS (256 aa)) form a disordered region. Tyrosine 615 bears the Phosphotyrosine mark. Positions 619–630 (ARREARPARTRN) are enriched in basic and acidic residues. Phosphoserine occurs at positions 638, 640, and 695. The residue at position 712 (threonine 712) is a Phosphothreonine. Residues 748–761 (ELRDKTRSLGRAEK) are compositionally biased toward basic and acidic residues. The segment covering 781–798 (ASASEASGSEKAAASAPA) has biased composition (low complexity). Basic residues predominate over residues 804–816 (KKTPIQKPPRKKS).

In terms of assembly, homophilic and heterophilic interaction via its extracellular domain. Interacts with SCARF1. The heterophilic interaction with SCARF1, which is stronger than the homophilic interaction with itself, is suppressed by the presence of SCARF1 ligand such as Ac-LDL.

The protein resides in the membrane. Functionally, probable adhesion protein, which mediates homophilic and heterophilic interactions. In contrast to SCARF1, it poorly mediates the binding and degradation of acetylated low density lipoprotein (Ac-LDL). This Mus musculus (Mouse) protein is Scavenger receptor class F member 2 (Scarf2).